A 183-amino-acid chain; its full sequence is Streptavidin-V1 (183 aa).

An N-terminal signal peptide occupies residues 1–24; it reads MRKIVVAAIAVSLTTVSITASASA. The region spanning 37–159 is the Avidin-like domain; that stretch reads AEAGITGTWY…GHDTFTKVKP (123 aa). Residues Tyr-67 and Tyr-78 each contribute to the biotin site. The short motif at 83 to 85 is the Cell attachment site; atypical element; the sequence is RYD. Positions 116, 132, and 144 each coordinate biotin.

It belongs to the avidin/streptavidin family. In terms of assembly, homotetramer.

It is found in the secreted. The biological function of streptavidin is not known. Forms a strong non-covalent specific complex with biotin (one molecule of biotin per subunit of streptavidin). In Streptomyces violaceus (Streptomyces venezuelae), this protein is Streptavidin-V1.